We begin with the raw amino-acid sequence, 386 residues long: Succinate--CoA ligase [ADP-forming] subunit beta (386 aa).

Positions 9-244 constitute an ATP-grasp domain; it reads KDLLTAYQLP…PSQENIRDVL (236 aa). ATP contacts are provided by residues K46, 53-55, V102, and E107; that span reads GRG. Residues N199 and D213 each coordinate Mg(2+). Residues N264 and 321 to 323 contribute to the substrate site; that span reads GIM.

This sequence belongs to the succinate/malate CoA ligase beta subunit family. Heterotetramer of two alpha and two beta subunits. The cofactor is Mg(2+).

The catalysed reaction is succinate + ATP + CoA = succinyl-CoA + ADP + phosphate. The enzyme catalyses GTP + succinate + CoA = succinyl-CoA + GDP + phosphate. The protein operates within carbohydrate metabolism; tricarboxylic acid cycle; succinate from succinyl-CoA (ligase route): step 1/1. Succinyl-CoA synthetase functions in the citric acid cycle (TCA), coupling the hydrolysis of succinyl-CoA to the synthesis of either ATP or GTP and thus represents the only step of substrate-level phosphorylation in the TCA. The beta subunit provides nucleotide specificity of the enzyme and binds the substrate succinate, while the binding sites for coenzyme A and phosphate are found in the alpha subunit. The polypeptide is Succinate--CoA ligase [ADP-forming] subunit beta (Chlamydia trachomatis serovar A (strain ATCC VR-571B / DSM 19440 / HAR-13)).